The sequence spans 896 residues: Protein argonaute 9 (896 aa).

A PAZ domain is found at 267–380 (PVVDFLLANQ…FPIEFCNLVS (114 aa)). The Piwi domain maps to 550–857 (FLLCILAERK…AAAQMGTVMK (308 aa)).

It belongs to the argonaute family. Ago subfamily. As to expression, expressed in embryonic shoot apex region, pollen and developing ovules.

Functionally, involved in RNA-mediated post-transcriptional gene silencing (PTGS). Main component of the RNA-induced silencing complex (RISC) that binds to a short guide RNA such as a microRNA (miRNA) or small interfering RNA (siRNA). RISC uses the mature miRNA or siRNA as a guide for slicer-directed cleavage of homologous mRNAs to repress gene expression. Associates preferentially with small RNAs of 24 nucleotide in length with a 5' terminal adenosine. Interacts with 24 nucleotide sRNAs derived from transposable elements (TEs). Required to silence pericentrometric-located TEs in female gametes and their accessory cells. Necessary to inactivate a significant proportion of long terminal repeat retrotransposons (LTRs) in the ovule. Required to specify cell fate in ovule. Involved in the control of female gamete formation by restricting the specification of gametophyte precursors in a dosage-dependent, non-cell-autonomous manner. Targeted by turnip yellows virus (TuYV) protein P0 (via F-box-like domain) for probable proteasome degradation and thereby inactivating AGO9 function in RNA silencing. This Arabidopsis thaliana (Mouse-ear cress) protein is Protein argonaute 9 (AGO9).